Consider the following 336-residue polypeptide: Peroxidase 72 (336 aa).

Positions 1 to 23 are cleaved as a signal peptide; it reads MAKSLNILIAALSLIAFSPFCLC. Cystine bridges form between cysteine 42–cysteine 122, cysteine 75–cysteine 80, cysteine 128–cysteine 329, and cysteine 207–cysteine 239. Histidine 73 functions as the Proton acceptor in the catalytic mechanism. The Ca(2+) site is built by aspartate 74, valine 77, glycine 79, aspartate 81, and serine 83. Residue proline 170 coordinates substrate. Asparagine 173 carries an N-linked (GlcNAc...) asparagine glycan. A heme b-binding site is contributed by histidine 200. Threonine 201 contacts Ca(2+). N-linked (GlcNAc...) asparagine glycosylation occurs at asparagine 216. Positions 252, 255, and 260 each coordinate Ca(2+).

Belongs to the peroxidase family. Classical plant (class III) peroxidase subfamily. It depends on heme b as a cofactor. The cofactor is Ca(2+). As to expression, slightly expressed in roots.

It is found in the secreted. It carries out the reaction 2 a phenolic donor + H2O2 = 2 a phenolic radical donor + 2 H2O. In terms of biological role, removal of H(2)O(2), oxidation of toxic reductants, biosynthesis and degradation of lignin, suberization, auxin catabolism, response to environmental stresses such as wounding, pathogen attack and oxidative stress. These functions might be dependent on each isozyme/isoform in each plant tissue. The chain is Peroxidase 72 (PER72) from Arabidopsis thaliana (Mouse-ear cress).